A 288-amino-acid chain; its full sequence is Glucose-1-phosphate thymidylyltransferase (288 aa).

2 residues coordinate Mg(2+): D108 and D223.

This sequence belongs to the glucose-1-phosphate thymidylyltransferase family. In terms of assembly, homotetramer. Requires Mg(2+) as cofactor.

The catalysed reaction is dTTP + alpha-D-glucose 1-phosphate + H(+) = dTDP-alpha-D-glucose + diphosphate. Its function is as follows. Catalyzes the formation of dTDP-glucose, from dTTP and glucose 1-phosphate, as well as its pyrophosphorolysis. This chain is Glucose-1-phosphate thymidylyltransferase (rmlA1), found in Neisseria meningitidis serogroup A / serotype 4A (strain DSM 15465 / Z2491).